We begin with the raw amino-acid sequence, 1070 residues long: DNA-directed RNA polymerase subunit beta (1070 aa).

The protein belongs to the RNA polymerase beta chain family. In plastids the minimal PEP RNA polymerase catalytic core is composed of four subunits: alpha, beta, beta', and beta''. When a (nuclear-encoded) sigma factor is associated with the core the holoenzyme is formed, which can initiate transcription.

It is found in the plastid. The protein resides in the chloroplast. The catalysed reaction is RNA(n) + a ribonucleoside 5'-triphosphate = RNA(n+1) + diphosphate. DNA-dependent RNA polymerase catalyzes the transcription of DNA into RNA using the four ribonucleoside triphosphates as substrates. This is DNA-directed RNA polymerase subunit beta from Phalaenopsis aphrodite subsp. formosana (Moth orchid).